The primary structure comprises 154 residues: Small ribosomal subunit protein uS7 (154 aa).

This sequence belongs to the universal ribosomal protein uS7 family. In terms of assembly, part of the 30S ribosomal subunit. Contacts proteins S9 and S11.

In terms of biological role, one of the primary rRNA binding proteins, it binds directly to 16S rRNA where it nucleates assembly of the head domain of the 30S subunit. Is located at the subunit interface close to the decoding center, probably blocks exit of the E-site tRNA. The sequence is that of Small ribosomal subunit protein uS7 from Karelsulcia muelleri (strain GWSS) (Sulcia muelleri).